A 368-amino-acid polypeptide reads, in one-letter code: MSLSAIGFEGLRERLEVSFFEPSLFLDTHGKGLRALSKSQIDEILAPAECTIVSSLSNDELDSYVLSESSLFIFPYKIIIKTCGTTKLLLSIEPLLRLAGGVSLEVKSVRYTRGSFLCPGGQPFPQRNLSEEVSVLDGHFAKMGLSSVAYLMGDDDETKKWHVYSASAPAKNSNGDNNVYTLEMCMSGLDKDKASVFFKNESSSAGSMTDNSGIRKILPQSQICDFEFEPCGYSMNSVEGDASSTIHVTPEDGFSYASFEAVGYDFTTMDLSQLVSRVLTCFEPKQFSVAVHSSVAQKSYDHSGLSVDLEDYGCRETTVGVSRRRERNSDVSEVREAGNVLWFSEIDLKCEWSSNSSCTSEDEKEEGI.

Catalysis depends on residues Glu9 and Arg12. Residue Ser69 is the Schiff-base intermediate with substrate; via pyruvic acid of the active site. Ser69 is subject to Pyruvic acid (Ser); by autocatalysis. The active-site Proton donor; for catalytic activity is Cys83. Active-site proton acceptor; for processing activity residues include Ser234 and His247.

This sequence belongs to the eukaryotic AdoMetDC family. Requires pyruvate as cofactor. In terms of processing, is synthesized initially as an inactive proenzyme. Formation of the active enzyme involves a self-maturation process in which the active site pyruvoyl group is generated from an internal serine residue via an autocatalytic post-translational modification. Two non-identical subunits are generated from the proenzyme in this reaction, and the pyruvate is formed at the N-terminus of the alpha chain, which is derived from the carboxyl end of the proenzyme. The post-translation cleavage follows an unusual pathway, termed non-hydrolytic serinolysis, in which the side chain hydroxyl group of the serine supplies its oxygen atom to form the C-terminus of the beta chain, while the remainder of the serine residue undergoes an oxidative deamination to produce ammonia and the pyruvoyl group blocking the N-terminus of the alpha chain.

The catalysed reaction is S-adenosyl-L-methionine + H(+) = S-adenosyl 3-(methylsulfanyl)propylamine + CO2. It participates in amine and polyamine biosynthesis; S-adenosylmethioninamine biosynthesis; S-adenosylmethioninamine from S-adenosyl-L-methionine: step 1/1. This Brassica juncea (Indian mustard) protein is S-adenosylmethionine decarboxylase proenzyme 1 (SAMDC1).